The chain runs to 147 residues: MLCVDVNVLVYAHRADLREHADYRGLLERLANDDEPLGLPDSVLAGFIRVVTNRRVFTEPTSPQDAWQAVDALLAAPAAMRLRPGERHWMAFRQLASDVDANGNDIADAHLAAYALENNATWLSADRGFARFRRLRWRHPLDGQTHL.

The region spanning 3-139 (CVDVNVLVYA…ARFRRLRWRH (137 aa)) is the PINc domain. Mg(2+)-binding residues include Asp-5 and Asp-108.

This sequence belongs to the PINc/VapC protein family. Requires Mg(2+) as cofactor.

Toxic component of a type II toxin-antitoxin (TA) system. An RNase. Its toxic effect is neutralized by coexpression with cognate antitoxin VapB43. This Mycobacterium tuberculosis (strain CDC 1551 / Oshkosh) protein is Ribonuclease VapC43.